Here is a 160-residue protein sequence, read N- to C-terminus: uncharacterized protein (160 aa).

The region spanning 37-110 (LMSLKPKEDI…TDYLKLYTIY (74 aa)) is the Cupin type-2 domain.

The protein resides in the virion. This is an uncharacterized protein from Acanthamoeba polyphaga mimivirus (APMV).